The following is a 215-amino-acid chain: tRNA (guanine-N(7)-)-methyltransferase (215 aa).

4 residues coordinate S-adenosyl-L-methionine: E43, E68, D95, and D117. D117 is a catalytic residue. Substrate contacts are provided by residues K121, D153, and 190–193; that span reads TEYE.

The protein belongs to the class I-like SAM-binding methyltransferase superfamily. TrmB family.

The enzyme catalyses guanosine(46) in tRNA + S-adenosyl-L-methionine = N(7)-methylguanosine(46) in tRNA + S-adenosyl-L-homocysteine. The protein operates within tRNA modification; N(7)-methylguanine-tRNA biosynthesis. Catalyzes the formation of N(7)-methylguanine at position 46 (m7G46) in tRNA. The sequence is that of tRNA (guanine-N(7)-)-methyltransferase from Staphylococcus epidermidis (strain ATCC 35984 / DSM 28319 / BCRC 17069 / CCUG 31568 / BM 3577 / RP62A).